The sequence spans 70 residues: Translation initiation factor IF-1 (70 aa).

The S1-like domain maps to 1 to 70; it reads MKETNLSIKG…LTKGRIIYRH (70 aa).

Belongs to the IF-1 family. In terms of assembly, component of the 30S ribosomal translation pre-initiation complex which assembles on the 30S ribosome in the order IF-2 and IF-3, IF-1 and N-formylmethionyl-tRNA(fMet); mRNA recruitment can occur at any time during PIC assembly.

The protein localises to the cytoplasm. In terms of biological role, one of the essential components for the initiation of protein synthesis. Stabilizes the binding of IF-2 and IF-3 on the 30S subunit to which N-formylmethionyl-tRNA(fMet) subsequently binds. Helps modulate mRNA selection, yielding the 30S pre-initiation complex (PIC). Upon addition of the 50S ribosomal subunit IF-1, IF-2 and IF-3 are released leaving the mature 70S translation initiation complex. The polypeptide is Translation initiation factor IF-1 (Mycoplasmoides gallisepticum (strain R(low / passage 15 / clone 2)) (Mycoplasma gallisepticum)).